Reading from the N-terminus, the 513-residue chain is Activin receptor type-2A (513 aa).

Positions 1 to 19 are cleaved as a signal peptide; the sequence is MGAAAKLAFAVFLISCSSG. The Extracellular segment spans residues 20 to 135; the sequence is AILGRSETQE…TSNPVTPKPP (116 aa). Cystine bridges form between C30/C60, C50/C78, C85/C104, C91/C103, and C105/C110. Residues N43 and N66 are each glycosylated (N-linked (GlcNAc...) asparagine). A helical membrane pass occupies residues 136 to 161; the sequence is YYNILLYSLVPLMLVAGIVICAFWVY. Residues 162–513 lie on the Cytoplasmic side of the membrane; it reads RHHKMAYPPV…VDFPPKESSL (352 aa). Residues 192–485 form the Protein kinase domain; that stretch reads LQLLEVKARG…GERITQMQRL (294 aa). ATP is bound by residues 198–206 and K219; that span reads KARGGFGCV. The active-site Proton acceptor is D322.

This sequence belongs to the protein kinase superfamily. TKL Ser/Thr protein kinase family. TGFB receptor subfamily. Part of a complex consisting of MAGI2/ARIP1, ACVR2A, ACVR1B and SMAD3. Interacts with MAGI2/ARIP1. Interacts with type I receptor ACVR1. Interacts with TSC22D1/TSC-22. Interacts with activin A/INHBA. Requires Mg(2+) as cofactor. Mn(2+) serves as cofactor.

The protein localises to the cell membrane. It catalyses the reaction L-threonyl-[receptor-protein] + ATP = O-phospho-L-threonyl-[receptor-protein] + ADP + H(+). The catalysed reaction is L-seryl-[receptor-protein] + ATP = O-phospho-L-seryl-[receptor-protein] + ADP + H(+). On ligand binding, forms a receptor complex consisting of two type II and two type I transmembrane serine/threonine kinases. Type II receptors phosphorylate and activate type I receptors which autophosphorylate, then bind and activate SMAD transcriptional regulators. Receptor for activin A, activin B and inhibin A. Mediates induction of adipogenesis by GDF6. The protein is Activin receptor type-2A (ACVR2A) of Ovis aries (Sheep).